The sequence spans 337 residues: Ketol-acid reductoisomerase (NADP(+)) (337 aa).

The region spanning 1-181 (MKIYYEHDAD…GAARAGVIAT (181 aa)) is the KARI N-terminal Rossmann domain. NADP(+) is bound by residues 24-27 (FGSQ), Arg47, Ser50, Ser52, and 82-85 (DEKQ). The active site involves His107. Gly133 contributes to the NADP(+) binding site. Residues 182 to 328 (TFKDETETDL…SRLRAMMPFL (147 aa)) enclose the KARI C-terminal knotted domain. Residues Asp190, Glu194, Glu226, and Glu230 each contribute to the Mg(2+) site. Residue Ser251 participates in substrate binding.

The protein belongs to the ketol-acid reductoisomerase family. Requires Mg(2+) as cofactor.

The enzyme catalyses (2R)-2,3-dihydroxy-3-methylbutanoate + NADP(+) = (2S)-2-acetolactate + NADPH + H(+). The catalysed reaction is (2R,3R)-2,3-dihydroxy-3-methylpentanoate + NADP(+) = (S)-2-ethyl-2-hydroxy-3-oxobutanoate + NADPH + H(+). Its pathway is amino-acid biosynthesis; L-isoleucine biosynthesis; L-isoleucine from 2-oxobutanoate: step 2/4. It participates in amino-acid biosynthesis; L-valine biosynthesis; L-valine from pyruvate: step 2/4. Functionally, involved in the biosynthesis of branched-chain amino acids (BCAA). Catalyzes an alkyl-migration followed by a ketol-acid reduction of (S)-2-acetolactate (S2AL) to yield (R)-2,3-dihydroxy-isovalerate. In the isomerase reaction, S2AL is rearranged via a Mg-dependent methyl migration to produce 3-hydroxy-3-methyl-2-ketobutyrate (HMKB). In the reductase reaction, this 2-ketoacid undergoes a metal-dependent reduction by NADPH to yield (R)-2,3-dihydroxy-isovalerate. The polypeptide is Ketol-acid reductoisomerase (NADP(+)) (Thermus thermophilus (strain ATCC BAA-163 / DSM 7039 / HB27)).